A 33-amino-acid chain; its full sequence is Mu/omega-theraphotoxin-Tap2a (33 aa).

Cystine bridges form between C2–C17, C9–C22, and C16–C29.

The protein belongs to the neurotoxin 10 (Hwtx-1) family. 59 (Tltx) subfamily. In terms of tissue distribution, expressed by the venom gland.

The protein localises to the secreted. Gating-modifier toxin that inhibits both sodium (Nav) and calcium (Cav3) channels by inducing hyperpolarizing shift in voltage-dependence of activation and steady state inactivation. Inhibits Nav1.1/SCN1A, Nav1.2/SCN2A, Nav1.6/SCN6A, Nav1.7/SCN9A and Cav3.1/CACNA1G sodium and calcium channels at nanomolar concentrations (IC(50)=169-621 nM). Surprisingly, selectively slows fast inactivation of Nav1.3/SCN3A. Also shows moderate inhibition of Nav1.3/SCN3A sodium channels (IC(50)=1216 nM). This chain is Mu/omega-theraphotoxin-Tap2a, found in Theraphosa apophysis (Goliath pinkfoot tarantula).